The chain runs to 126 residues: Large ribosomal subunit protein eL18 (126 aa).

Belongs to the eukaryotic ribosomal protein eL18 family.

This Methanosarcina acetivorans (strain ATCC 35395 / DSM 2834 / JCM 12185 / C2A) protein is Large ribosomal subunit protein eL18.